The primary structure comprises 244 residues: Ribosomal RNA small subunit methyltransferase G (244 aa).

S-adenosyl-L-methionine contacts are provided by residues G79, F84, 130–131 (AE), and R150. Positions 221-244 (KKPSPKRYPRKPGTPAKQPLTAPM) are disordered.

It belongs to the methyltransferase superfamily. RNA methyltransferase RsmG family.

The protein localises to the cytoplasm. Specifically methylates the N7 position of a guanine in 16S rRNA. This chain is Ribosomal RNA small subunit methyltransferase G, found in Lactiplantibacillus plantarum (strain ATCC BAA-793 / NCIMB 8826 / WCFS1) (Lactobacillus plantarum).